We begin with the raw amino-acid sequence, 479 residues long: Sulfate adenylyltransferase subunit 1 (479 aa).

Positions 25 to 239 constitute a tr-type G domain; the sequence is KSLLRFLTCG…EVLETVDIQR (215 aa). The tract at residues 34–41 is G1; sequence GSVDDGKS. 34–41 is a GTP binding site; sequence GSVDDGKS. The interval 92–96 is G2; that stretch reads GITID. Residues 113-116 form a G3 region; it reads DTPG. GTP-binding positions include 113–117 and 168–171; these read DTPGH and NKMD. The tract at residues 168–171 is G4; the sequence is NKMD. The segment at 206–208 is G5; that stretch reads SAL.

The protein belongs to the TRAFAC class translation factor GTPase superfamily. Classic translation factor GTPase family. CysN/NodQ subfamily. In terms of assembly, heterodimer composed of CysD, the smaller subunit, and CysN.

It catalyses the reaction sulfate + ATP + H(+) = adenosine 5'-phosphosulfate + diphosphate. It functions in the pathway sulfur metabolism; hydrogen sulfide biosynthesis; sulfite from sulfate: step 1/3. In terms of biological role, with CysD forms the ATP sulfurylase (ATPS) that catalyzes the adenylation of sulfate producing adenosine 5'-phosphosulfate (APS) and diphosphate, the first enzymatic step in sulfur assimilation pathway. APS synthesis involves the formation of a high-energy phosphoric-sulfuric acid anhydride bond driven by GTP hydrolysis by CysN coupled to ATP hydrolysis by CysD. This is Sulfate adenylyltransferase subunit 1 from Salmonella arizonae (strain ATCC BAA-731 / CDC346-86 / RSK2980).